A 717-amino-acid polypeptide reads, in one-letter code: MDKLYVLVGFILMNILKKVFLSTIFVSIIFCLGILFLVKSNLGLRTIFFLSHYLVPELEVDQLIGTLNNFKLINVKYKSKNILLTIKVLQLNFIVHIFKKFYIDVNLVTCKNVNFFIKNINDVNFKTNGVFPLNLKSKFFSYFFIFFKDIRFYNFTANVDGVELFTNFFSSKGYWNKQFLELEFFKTDVVSINNFYCFDSTNNYCRFNSRNFLVCCRQYLKMLFNYFKKGNFDTFVNIDIANFSCNKIYLEDNKNISISKFFINFRIFKNSVNIKRLFFVFRRMFKVRINGFININQNYINLTINCVNKNEIYGSSSNIKIIIHGLWLSILKINFYIDKININFLIKRILMPEKLIFKCKLRLSNLNSYIHRKNFSYLNNFKLEIFTNSSEYFFQSYSVLNIKDVFPIKFCLLGIGNYKNIFLKLIKFRIFQKKILCNYEWKYCSNRDLVQKFLLNKFFDNLKKTKLLINIKKIILNNDFNEKILLLSSNFLNIRDKYIFTDVHIISGKNSFSMRSDFNSFLNLNVFFSIKDLKFFFPNFDGKFDIDVKIFRSINYYHAICKFIGNKLDFNIFKIVNIKFLIDINSKDFLNTIFLSVTKLFFGNLYVNHVFFKIKNEHDKRYLATICLSSYNNFMRLILDKYFNINVFIQTNVLRKINYFKFYLDSNVNKTVFALISYLFSNYYKKININYVSFFKHSIKSKFVKFLNKFIYVKQIF.

Residues 19 to 38 (VFLSTIFVSIIFCLGILFLV) form a helical membrane-spanning segment.

It to E.coli YtfN.

Its subcellular location is the membrane. This is an uncharacterized protein from Buchnera aphidicola subsp. Baizongia pistaciae (strain Bp).